The primary structure comprises 444 residues: Chromosome partition protein MukF (444 aa).

The segment at 212-240 (LDETSGNLRELQDTLNAAGDKLQAQLLRI) is leucine-zipper.

The protein belongs to the MukF family. In terms of assembly, interacts, and probably forms a ternary complex, with MukE and MukB via its C-terminal region. The complex formation is stimulated by calcium or magnesium. It is required for an interaction between MukE and MukB.

It localises to the cytoplasm. The protein resides in the nucleoid. Involved in chromosome condensation, segregation and cell cycle progression. May participate in facilitating chromosome segregation by condensation DNA from both sides of a centrally located replisome during cell division. Not required for mini-F plasmid partitioning. Probably acts via its interaction with MukB and MukE. Overexpression results in anucleate cells. It has a calcium binding activity. The protein is Chromosome partition protein MukF of Haemophilus influenzae (strain PittGG).